The primary structure comprises 396 residues: Elongation factor Tu (396 aa).

The 197-residue stretch at 10–206 (KPHCNIGTIG…EVDAYIPQPE (197 aa)) folds into the tr-type G domain. The segment at 19–26 (GHVDHGKT) is G1. GTP is bound at residue 19–26 (GHVDHGKT). Thr26 provides a ligand contact to Mg(2+). The interval 60-64 (GITIS) is G2. The interval 81–84 (DCPG) is G3. Residues 81–85 (DCPGH) and 136–139 (NKCD) contribute to the GTP site. Residues 136 to 139 (NKCD) are G4. The G5 stretch occupies residues 174–176 (SAL).

It belongs to the TRAFAC class translation factor GTPase superfamily. Classic translation factor GTPase family. EF-Tu/EF-1A subfamily. As to quaternary structure, monomer.

It is found in the cytoplasm. The catalysed reaction is GTP + H2O = GDP + phosphate + H(+). Its function is as follows. GTP hydrolase that promotes the GTP-dependent binding of aminoacyl-tRNA to the A-site of ribosomes during protein biosynthesis. In Paramagnetospirillum magneticum (strain ATCC 700264 / AMB-1) (Magnetospirillum magneticum), this protein is Elongation factor Tu.